A 219-amino-acid polypeptide reads, in one-letter code: 7-cyano-7-deazaguanine synthase (219 aa).

10–20 (FSGGQDSTTCL) contributes to the ATP binding site. Zn(2+)-binding residues include Cys188, Cys197, Cys200, and Cys203.

Belongs to the QueC family. As to quaternary structure, homodimer. The cofactor is Zn(2+).

The enzyme catalyses 7-carboxy-7-deazaguanine + NH4(+) + ATP = 7-cyano-7-deazaguanine + ADP + phosphate + H2O + H(+). It participates in purine metabolism; 7-cyano-7-deazaguanine biosynthesis. Its function is as follows. Catalyzes the ATP-dependent conversion of 7-carboxy-7-deazaguanine (CDG) to 7-cyano-7-deazaguanine (preQ(0)). The polypeptide is 7-cyano-7-deazaguanine synthase (Clostridium botulinum (strain 657 / Type Ba4)).